We begin with the raw amino-acid sequence, 200 residues long: Mediator of RNA polymerase II transcription subunit 22 (200 aa).

Positions 93 to 122 form a coiled coil; it reads SVNEAIDQRNQQLRALQEECDRKLITLRDE. Positions 167-200 are disordered; sequence SAPLLASPETGAGPLQSAAPVHSHGGGPGPTEHT. Residues 190-200 show a composition bias toward gly residues; sequence HGGGPGPTEHT.

The protein belongs to the Mediator complex subunit 22 family. As to quaternary structure, component of the Mediator complex, which is composed of MED1, MED4, MED6, MED7, MED8, MED9, MED10, MED11, MED12, MED13, MED13L, MED14, MED15, MED16, MED17, MED18, MED19, MED20, MED21, MED22, MED23, MED24, MED25, MED26, MED27, MED29, MED30, MED31, CCNC, CDK8 and CDC2L6/CDK11. The MED12, MED13, CCNC and CDK8 subunits form a distinct module termed the CDK8 module. Mediator containing the CDK8 module is less active than Mediator lacking this module in supporting transcriptional activation. Individual preparations of the Mediator complex lacking one or more distinct subunits have been variously termed ARC, CRSP, DRIP, PC2, SMCC and TRAP.

It is found in the nucleus. Functionally, component of the Mediator complex, a coactivator involved in the regulated transcription of nearly all RNA polymerase II-dependent genes. Mediator functions as a bridge to convey information from gene-specific regulatory proteins to the basal RNA polymerase II transcription machinery. Mediator is recruited to promoters by direct interactions with regulatory proteins and serves as a scaffold for the assembly of a functional preinitiation complex with RNA polymerase II and the general transcription factors. The polypeptide is Mediator of RNA polymerase II transcription subunit 22 (Med22) (Rattus norvegicus (Rat)).